Here is a 453-residue protein sequence, read N- to C-terminus: Probable glycine dehydrogenase (decarboxylating) subunit 1 (453 aa).

The protein belongs to the GcvP family. N-terminal subunit subfamily. In terms of assembly, the glycine cleavage system is composed of four proteins: P, T, L and H. In this organism, the P 'protein' is a heterodimer of two subunits.

It catalyses the reaction N(6)-[(R)-lipoyl]-L-lysyl-[glycine-cleavage complex H protein] + glycine + H(+) = N(6)-[(R)-S(8)-aminomethyldihydrolipoyl]-L-lysyl-[glycine-cleavage complex H protein] + CO2. The glycine cleavage system catalyzes the degradation of glycine. The P protein binds the alpha-amino group of glycine through its pyridoxal phosphate cofactor; CO(2) is released and the remaining methylamine moiety is then transferred to the lipoamide cofactor of the H protein. In Erythrobacter litoralis (strain HTCC2594), this protein is Probable glycine dehydrogenase (decarboxylating) subunit 1.